Consider the following 202-residue polypeptide: tRNA (guanine-N(7)-)-methyltransferase (202 aa).

Residues Glu34, Glu59, Asp86, and Asp107 each coordinate S-adenosyl-L-methionine. Residue Asp107 is part of the active site. Residues Lys111, Asp143, and 181–184 each bind substrate; that span reads TDYE.

The protein belongs to the class I-like SAM-binding methyltransferase superfamily. TrmB family.

It carries out the reaction guanosine(46) in tRNA + S-adenosyl-L-methionine = N(7)-methylguanosine(46) in tRNA + S-adenosyl-L-homocysteine. It functions in the pathway tRNA modification; N(7)-methylguanine-tRNA biosynthesis. In terms of biological role, catalyzes the formation of N(7)-methylguanine at position 46 (m7G46) in tRNA. This is tRNA (guanine-N(7)-)-methyltransferase from Metamycoplasma hominis (strain ATCC 23114 / DSM 25592 / NBRC 14850 / NCTC 10111 / PG21) (Mycoplasma hominis).